The sequence spans 352 residues: Sperm equatorial segment protein 1 (352 aa).

An N-terminal signal peptide occupies residues 1–19 (MKSLVLLVALLLWSSSVPA). An N-linked (GlcNAc...) asparagine glycan is attached at Asn-128. Positions 140–203 (IEKEEPEPEP…TESEDVPQLS (64 aa)) are disordered. A compositionally biased stretch (polar residues) spans 166 to 193 (TESSTSPYVTSYKSPVTTSDRSTGIEIS).

This sequence belongs to the SPESP1 family. Post-translationally, glycosylated. In testis there are two predominant forms of 77- and 67-kDa and a form of 47-kDa, whereas in epididymal sperm from caput, corpus, and cauda there are two forms of 47- and 43-kDa. Testis forms contain complex carbohydrate residues. Epididymal sperm forms are N-glycosylated. Then undergoes significant glycosylation in the testis and that the majority of these glycoconjugates are removed by the time sperm reach the caput epididymis.

It localises to the cytoplasmic vesicle. The protein localises to the secretory vesicle. The protein resides in the acrosome. Involved in fertilization ability of sperm. The chain is Sperm equatorial segment protein 1 from Macaca fascicularis (Crab-eating macaque).